We begin with the raw amino-acid sequence, 399 residues long: Argininosuccinate synthase (399 aa).

12–20 (AFSGGLDTS) contacts ATP. Tyr90 serves as a coordination point for L-citrulline. Gly120 lines the ATP pocket. 3 residues coordinate L-aspartate: Thr122, Asn126, and Asp127. Asn126 contributes to the L-citrulline binding site. L-citrulline contacts are provided by Arg130, Ser175, Glu260, and Tyr272.

Belongs to the argininosuccinate synthase family. Type 1 subfamily. Homotetramer.

The protein resides in the cytoplasm. It carries out the reaction L-citrulline + L-aspartate + ATP = 2-(N(omega)-L-arginino)succinate + AMP + diphosphate + H(+). It participates in amino-acid biosynthesis; L-arginine biosynthesis; L-arginine from L-ornithine and carbamoyl phosphate: step 2/3. The chain is Argininosuccinate synthase from Methanothermobacter thermautotrophicus (strain ATCC 29096 / DSM 1053 / JCM 10044 / NBRC 100330 / Delta H) (Methanobacterium thermoautotrophicum).